Here is a 118-residue protein sequence, read N- to C-terminus: Autophagy-related protein 8D (118 aa).

Residue glycine 118 is the site of Phosphatidylethanolamine amidated glycine attachment.

The protein belongs to the ATG8 family. As to quaternary structure, interacts with ATG4. In terms of processing, the C-terminal Gly is amidated with phosphatidylethanolamine by an activating system similar to that for ubiquitin.

The protein localises to the cytoplasmic vesicle. Its subcellular location is the autophagosome membrane. It is found in the vacuole membrane. The protein resides in the cytoplasm. It localises to the cytoskeleton. Functionally, ubiquitin-like modifier involved in autophagosomes formation. May mediate the delivery of the autophagosomes to the vacuole via the microtubule cytoskeleton. This chain is Autophagy-related protein 8D (ATG8D), found in Oryza sativa subsp. japonica (Rice).